Consider the following 202-residue polypeptide: dITP/XTP pyrophosphatase (202 aa).

Residue Thr8–Lys13 participates in substrate binding. Mg(2+)-binding residues include Glu41 and Asp70. Asp70 functions as the Proton acceptor in the catalytic mechanism. Residues Ser71, Phe155–Asp158, Lys178, and His183–Arg184 each bind substrate.

Belongs to the HAM1 NTPase family. As to quaternary structure, homodimer. Mg(2+) serves as cofactor.

It catalyses the reaction XTP + H2O = XMP + diphosphate + H(+). It carries out the reaction dITP + H2O = dIMP + diphosphate + H(+). The enzyme catalyses ITP + H2O = IMP + diphosphate + H(+). Its function is as follows. Pyrophosphatase that catalyzes the hydrolysis of nucleoside triphosphates to their monophosphate derivatives, with a high preference for the non-canonical purine nucleotides XTP (xanthosine triphosphate), dITP (deoxyinosine triphosphate) and ITP. Seems to function as a house-cleaning enzyme that removes non-canonical purine nucleotides from the nucleotide pool, thus preventing their incorporation into DNA/RNA and avoiding chromosomal lesions. The polypeptide is dITP/XTP pyrophosphatase (Bacillus anthracis).